A 116-amino-acid chain; its full sequence is Putative oxygen-evolving enhancer protein 1 (116 aa).

It belongs to the PsbO family.

The protein resides in the plastid. Its subcellular location is the chloroplast thylakoid membrane. Stabilizes the manganese cluster which is the primary site of water splitting. The polypeptide is Putative oxygen-evolving enhancer protein 1 (Pinus strobus (Eastern white pine)).